We begin with the raw amino-acid sequence, 158 residues long: GAF domain-containing protein A (158 aa).

Residues Asn-32 to Asn-158 enclose the GAF domain.

It belongs to the free Met sulfoxide reductase family.

The protein is GAF domain-containing protein A (gafA) of Dictyostelium discoideum (Social amoeba).